The following is a 213-amino-acid chain: 3-isopropylmalate dehydratase small subunit (213 aa).

This sequence belongs to the LeuD family. LeuD type 1 subfamily. As to quaternary structure, heterodimer of LeuC and LeuD.

It catalyses the reaction (2R,3S)-3-isopropylmalate = (2S)-2-isopropylmalate. Its pathway is amino-acid biosynthesis; L-leucine biosynthesis; L-leucine from 3-methyl-2-oxobutanoate: step 2/4. In terms of biological role, catalyzes the isomerization between 2-isopropylmalate and 3-isopropylmalate, via the formation of 2-isopropylmaleate. This is 3-isopropylmalate dehydratase small subunit from Aromatoleum aromaticum (strain DSM 19018 / LMG 30748 / EbN1) (Azoarcus sp. (strain EbN1)).